A 341-amino-acid polypeptide reads, in one-letter code: Methionine import ATP-binding protein MetN 3 (341 aa).

One can recognise an ABC transporter domain in the interval 2-241 (ILLENVKKIY…PQQDITKRFV (240 aa)). ATP is bound at residue 38–45 (GYSGAGKS).

This sequence belongs to the ABC transporter superfamily. Methionine importer (TC 3.A.1.24) family. The complex is composed of two ATP-binding proteins (MetN), two transmembrane proteins (MetI) and a solute-binding protein (MetQ).

The protein resides in the cell membrane. It carries out the reaction L-methionine(out) + ATP + H2O = L-methionine(in) + ADP + phosphate + H(+). It catalyses the reaction D-methionine(out) + ATP + H2O = D-methionine(in) + ADP + phosphate + H(+). In terms of biological role, part of the ABC transporter complex MetNIQ involved in methionine import. Responsible for energy coupling to the transport system. The chain is Methionine import ATP-binding protein MetN 3 from Bacillus cereus (strain ATCC 10987 / NRS 248).